A 247-amino-acid polypeptide reads, in one-letter code: Probable transcriptional regulatory protein YPO2055/y2255/YP_1898 (247 aa).

It belongs to the TACO1 family.

It is found in the cytoplasm. This is Probable transcriptional regulatory protein YPO2055/y2255/YP_1898 from Yersinia pestis.